The primary structure comprises 254 residues: Probable transcriptional regulatory protein MAE_13580 (254 aa).

The protein belongs to the TACO1 family.

It localises to the cytoplasm. This chain is Probable transcriptional regulatory protein MAE_13580, found in Microcystis aeruginosa (strain NIES-843 / IAM M-2473).